The following is a 480-amino-acid chain: 6-phosphogluconate dehydrogenase, decarboxylating 1 (480 aa).

NADP(+) contacts are provided by residues 10–15 (GLAVMG), 33–35 (NRT), 77–79 (VKA), and asparagine 105. Residues asparagine 105 and 131-133 (SGG) each bind substrate. Lysine 186 functions as the Proton acceptor in the catalytic mechanism. Residue 189-190 (HN) coordinates substrate. The Proton donor role is filled by glutamate 193. Residues tyrosine 194, lysine 264, arginine 291, arginine 450, and histidine 456 each contribute to the substrate site.

The protein belongs to the 6-phosphogluconate dehydrogenase family. Homodimer. Highly expressed in inflorescence, lowly expressed in root and embryos and almost absent in leaves.

The protein localises to the cytoplasm. The catalysed reaction is 6-phospho-D-gluconate + NADP(+) = D-ribulose 5-phosphate + CO2 + NADPH. The protein operates within carbohydrate degradation; pentose phosphate pathway; D-ribulose 5-phosphate from D-glucose 6-phosphate (oxidative stage): step 3/3. Its function is as follows. Catalyzes the oxidative decarboxylation of 6-phosphogluconate to ribulose 5-phosphate and CO(2), with concomitant reduction of NADP to NADPH. This is 6-phosphogluconate dehydrogenase, decarboxylating 1 (G6PGH1) from Oryza sativa subsp. japonica (Rice).